A 215-amino-acid polypeptide reads, in one-letter code: Eukaryotic translation initiation factor 4E-1 (215 aa).

The tract at residues 1 to 35 is disordered; it reads MAEDTETRPASAGAEEREEGEIADDGDGSAAAAAG. A compositionally biased stretch (acidic residues) spans 16–27; it reads EREEGEIADDGD. EIF4G-binding stretches follow at residues 40–43 and 50–86; these read HPLE and FDNP…NNIH. MRNA-binding positions include 58 to 63, Lys90, and 108 to 109; these read RAVAWG and WE. Cys113 and Cys151 form a disulfide bridge. Positions 134-143 are EIF4G-binding; sequence HTLLALIGEQ. MRNA contacts are provided by residues 158–163 and 203–207; these read RKNQER and KRSDK.

The protein belongs to the eukaryotic initiation factor 4E family. As to quaternary structure, EIF4F is a multi-subunit complex, the composition of which varies with external and internal environmental conditions. It is composed of at least EIF4A, EIF4E and EIF4G. EIF4E is also known to interact with other partners. In higher plants two isoforms of EIF4F have been identified, named isoform EIF4F and isoform EIF(iso)4F. Isoform EIF4F has subunits p220 and p26, whereas isoform EIF(iso)4F has subunits p82 and p28. In terms of assembly, (Microbial infection) Interacts with potyvirus viral genome-linked protein (VPg); this interaction is possible in susceptible hosts but impaired in resistant plants. According to the redox status, the Cys-113-Cys-151 disulfide bridge may have a role in regulating protein function by affecting its ability to bind capped mRNA.

It localises to the nucleus. Its subcellular location is the cytoplasm. Its function is as follows. Component of the protein complex eIF4F, which is involved in the recognition of the mRNA cap, ATP-dependent unwinding of 5'-terminal secondary structure and recruitment of mRNA to the ribosome. Recognizes and binds the 7-methylguanosine-containing mRNA cap during an early step in the initiation of protein synthesis and facilitates ribosome binding by inducing the unwinding of the mRNAs secondary structures. Key component of recessive resistance to potyviruses and bymoviruses, including barley yellow mosaic virus and barley mild mosaic virus. In terms of biological role, (Microbial infection) Susceptibility host factor required for viral infection by recruiting viral RNAs to the host ribosomal complex via an interaction with viral genome-linked protein (VPg). This is Eukaryotic translation initiation factor 4E-1 from Hordeum vulgare subsp. vulgare (Domesticated barley).